We begin with the raw amino-acid sequence, 309 residues long: Glutaminase (309 aa).

Substrate-binding residues include serine 64, asparagine 114, glutamate 160, asparagine 167, tyrosine 191, tyrosine 243, and valine 261.

It belongs to the glutaminase family. As to quaternary structure, homotetramer.

The enzyme catalyses L-glutamine + H2O = L-glutamate + NH4(+). The protein is Glutaminase of Rhodopseudomonas palustris (strain BisB18).